The sequence spans 292 residues: MTEKKRFPLSLSSIAEKAPRSGARTEVNRSSTSGKVATPQTATQNASQHGKRTITPARPAEVPRKAAAAPSSNERATPLVSEAVRKAMTARVAKQGVKDSKVLAAMDAVPRHLFMEPALASQAYIDASLPIGYHQTISQPYIVARMIEVMRNNQQGGVLNRVLEIGTGCGYQAAVLSLVAKEVYSIERIKGLHELAKANLRPMRVANIRLHYGDGMLGLPQAAPFDGIILAAAGLEVPQALLEQMTIGGRLVAPVGERHQVLQLIERVSKFEWKSSTLEDCHFVPLRPGTVT.

The tract at residues 1–76 (MTEKKRFPLS…AAAPSSNERA (76 aa)) is disordered. Over residues 28 to 48 (NRSSTSGKVATPQTATQNASQ) the composition is skewed to polar residues. S138 is a catalytic residue.

This sequence belongs to the methyltransferase superfamily. L-isoaspartyl/D-aspartyl protein methyltransferase family.

Its subcellular location is the cytoplasm. It catalyses the reaction [protein]-L-isoaspartate + S-adenosyl-L-methionine = [protein]-L-isoaspartate alpha-methyl ester + S-adenosyl-L-homocysteine. Functionally, catalyzes the methyl esterification of L-isoaspartyl residues in peptides and proteins that result from spontaneous decomposition of normal L-aspartyl and L-asparaginyl residues. It plays a role in the repair and/or degradation of damaged proteins. This is Protein-L-isoaspartate O-methyltransferase from Janthinobacterium sp. (strain Marseille) (Minibacterium massiliensis).